The chain runs to 167 residues: Epithelial membrane protein 2 (167 aa).

The chain crosses the membrane as a helical span at residues 1-21 (MLVLLAFIIAFHITSAALLFI). 3 N-linked (GlcNAc...) asparagine glycosylation sites follow: asparagine 44, asparagine 47, and asparagine 52. The next 3 membrane-spanning stretches (helical) occupy residues 67–87 (TMIL…LQLF), 95–115 (FVLT…AASI), and 143–163 (YILA…YLIL).

The protein belongs to the PMP-22/EMP/MP20 family. In terms of assembly, interacts with PTK2; regulates PTK2 activation and localization. Interacts with ITGB3; regulates the levels of the heterodimer ITGA5-ITGB3 integrin surface expression. Interacts with P2RX7 (via C-terminus). Interacts with ITGB1; the interaction may be direct or indirect and ITGB1 has a heterodimer form. Expressed in ciliary body epithelia, sclera, cornea, and retinal pigment epithelium (at protein level). Expressed in lung and endometrial tissue; expression is particularly abundant in secretory endometrium (at protein level). Expressed in placental villous syncytiotrophoblasts and cytotrophoblasts and on the membrane of interstitial trophoblasts (at protein level).

It is found in the golgi apparatus membrane. Its subcellular location is the cell membrane. It localises to the apical cell membrane. The protein localises to the membrane raft. The protein resides in the cytoplasm. It is found in the nucleus. Its subcellular location is the perinuclear region. Its function is as follows. Functions as a key regulator of cell membrane composition by regulating protein surface expression. Also, plays a role in regulation of processes including cell migration, cell proliferation, cell contraction and cell adhesion. Regulates transepithelial migration of neutrophils into the alveolar lumen, potentially via mediation of cell surface expression of adhesion markers and lipid raft formation. Negatively regulates caveolae formation by reducing CAV1 expression and CAV1 amount by increasing lysosomal degradation. Facilitates surface trafficking and formation of lipid rafts bearing GPI-anchor proteins. Regulates surface expression of MHC1 and ICAM1 proteins increasing susceptibility to T-cell mediated cytotoxicity. Regulates the plasma membrane expression of the integrin heterodimers ITGA6-ITGB1, ITGA5-ITGB3 and ITGA5-ITGB1 resulting in modulation of cell-matrix adhesion. Also regulates many processes through PTK2. Regulates blood vessel endothelial cell migration and angiogenesis by regulating VEGF protein expression through PTK2 activation. Regulates cell migration and cell contraction through PTK2 and SRC activation. Regulates focal adhesion density, F-actin conformation and cell adhesion capacity through interaction with PTK2. Positively regulates cell proliferation. Plays a role during cell death and cell blebbing. Promotes angiogenesis and vasculogenesis through induction of VEGFA via a HIF1A-dependent pathway. Also plays a role in embryo implantation by regulating surface trafficking of integrin heterodimer ITGA5-ITGB3. Plays a role in placental angiogenesis and uterine natural killer cell regulation at the maternal-fetal placental interface, however not required in the maternal tissues for a viable pregnancy. Involved in the early stages of embryogenic development and cardiogenesis, potentially via regulation of epithelial-mesenchymal transition timing. May play a role in glomerular filtration. The protein is Epithelial membrane protein 2 (EMP2) of Homo sapiens (Human).